A 1372-amino-acid chain; its full sequence is MGQLTKKFGKIDVSLPIPHLLNLQVDSYVKFLQEGATERRHDEGLEGVFRSVFPIEDFNRTASLEFVSYEVGEPKYDQPECISKGLTYEAPIRIKVRLVVYDVDEDSGNRTIRDIKEQEIYFGTLPLMTEKGTFIINGTERVIVNQLQRSPGIIFEHDSGKTHSSRKVLYSCRIIPMRGSWLDFDFDHKDILYVRIDRRRKMPATILFKAMGMSKTDILDYFYKKEFYRLDPMGRLMWEVQKDMYRKDSAFVDIEDGKGGTIVKAGKPITKRAWRLISEAGLETIEVAPDTIEGMFLAEDIVNPATGEVLAEAADEITASLVENLREAGISRLPVLHTKGLETSSSLRDTLVLDKTPDMEAAQVEIYRRLRPSSPPTPEIAASFFDNLFRSADYYDLSPVGRYKLNQRLGIDQSVDLRTLTDDDILRAIRVLLHLKDSHGPADDIDHLGNRRVRPVGELVENQYRIGLVRMERAIKERMSLQEVSTLMPHDLINPKPVAAVLKEFFGTSQLSQFMDQTNALSEVTHKRRLSALGPGGLTRERAGFEVRDVHTSHYGRICPIETPEGPNIGLIVSLTTYAKVNDFGFIETPYRIIREGALTDDIKFLDASREQGEVVAQANAAVDADGKLADEYVTARVRGDVLMSHRDEVTLMDISPSQMVSISAALIPFLEHDDANRALMGSNMQRQAVPLLRSEKPIVGTGMEGDVARDSGACILAEGPGIVRYADATRIIVSYENGLYPDRGGVRAYDLQKYHKSNQNSCFGQRPTCHPGQIVKKGDVLADGPGIEDGELALGKNLVVAFMPWCGYNFEDSILISERVVKEDVFTSIHIEEFEVVARDTKLGPEEITRDIPNVGEDMLRNLDGSGIIRIGASVKPDDILVGKITPKGETQLTPEEKLLRAIFGDKARDVKNTSLKVPPGIEGTIIDVKVFNRRSGEKDERTRNIEDYETARIDKKEQDHVRALGDALRDRLADTLVGKQIAVTLPGKRKGEVLAEAGAPMTRELLDALPVKRLAGLFKSREVDEMVDTALEDYDRQVAFLKGIYDSKREKVTEGDDLPPGVIKMVKVHIAVKRKLNVGDKMAGRHGNKGVVSCILPEEDMPFFADGRPVDIVLNPLGVPSRMNIGQIMETHLGWGAKELGRQLAEMLDSGAAMATLRHEVKDVFRSATIAKLVDEMDDETFRKAVSKLRTGIVTKTPVFDGASEEDIWSWIERAGMDGDGKTVLYDGRTGDKFYNRVTTGVMYILKLHHLVDEKIHARSTGPYSLVTQQPLGGKAQFGGQRLGEMEVWALEAYGASYLLQEFLTVKSDDVTGRVKMYEKIVKGDNFLEAGLPESFNVLVKELMSLGLNVTLHQEEGKKRPKRVGFMSAL.

Belongs to the RNA polymerase beta chain family. In terms of assembly, the RNAP catalytic core consists of 2 alpha, 1 beta, 1 beta' and 1 omega subunit. When a sigma factor is associated with the core the holoenzyme is formed, which can initiate transcription.

It carries out the reaction RNA(n) + a ribonucleoside 5'-triphosphate = RNA(n+1) + diphosphate. Functionally, DNA-dependent RNA polymerase catalyzes the transcription of DNA into RNA using the four ribonucleoside triphosphates as substrates. The chain is DNA-directed RNA polymerase subunit beta from Nitratidesulfovibrio vulgaris (strain DP4) (Desulfovibrio vulgaris).